A 71-amino-acid polypeptide reads, in one-letter code: Small ribosomal subunit protein eS17 (71 aa).

The protein belongs to the eukaryotic ribosomal protein eS17 family.

This chain is Small ribosomal subunit protein eS17, found in Pyrobaculum islandicum (strain DSM 4184 / JCM 9189 / GEO3).